The sequence spans 724 residues: Probable serine/threonine-protein kinase KKQ8 (724 aa).

Disordered regions lie at residues 1-81 and 93-188; these read MVMQ…RQRS and HPFR…KDIL. Ser-19 carries the post-translational modification Phosphoserine. Over residues 45 to 54 the composition is skewed to low complexity; the sequence is PYRSSSTSPK. Positions 95–106 are enriched in polar residues; the sequence is FRQTGSGASNSP. Residues 143-162 show a composition bias toward low complexity; sequence RSSSVSSCDSSNGTTSSSDS. Residues Ser-232, Ser-238, and Ser-241 each carry the phosphoserine modification. 2 stretches are compositionally biased toward polar residues: residues 318–329 and 338–351; these read NASSLLPNVEKS and GQSP…SPTQ. The tract at residues 318 to 355 is disordered; sequence NASSLLPNVEKSQTNHEKRTGQSPNDSNRSSPTQGRED. The Protein kinase domain maps to 412 to 712; that stretch reads GHPVGLVGAG…VGKLLDMQWM (301 aa). ATP is bound by residues 418–426 and Lys-455; that span reads VGAGAYGEV. Asp-563 (proton acceptor) is an active-site residue.

It belongs to the protein kinase superfamily. CAMK Ser/Thr protein kinase family. NPR/HAL subfamily. HAL5 sub-subfamily.

It is found in the cytoplasm. The enzyme catalyses L-seryl-[protein] + ATP = O-phospho-L-seryl-[protein] + ADP + H(+). The catalysed reaction is L-threonyl-[protein] + ATP = O-phospho-L-threonyl-[protein] + ADP + H(+). In Saccharomyces cerevisiae (strain YJM789) (Baker's yeast), this protein is Probable serine/threonine-protein kinase KKQ8 (KKQ8).